A 352-amino-acid chain; its full sequence is D-alanine--D-alanine ligase (352 aa).

Positions 135 to 344 (KTVFAKAGLP…FPQLVDRLIE (210 aa)) constitute an ATP-grasp domain. Residue 171-226 (EETLNYPCFVKPANLGSSVGIAKVRSRSELEKALDQAASYDRRIIVEAGVIAREVE) participates in ATP binding. Mg(2+)-binding residues include D297, E311, and N313.

This sequence belongs to the D-alanine--D-alanine ligase family. Requires Mg(2+) as cofactor. Mn(2+) is required as a cofactor.

Its subcellular location is the cytoplasm. It catalyses the reaction 2 D-alanine + ATP = D-alanyl-D-alanine + ADP + phosphate + H(+). Its pathway is cell wall biogenesis; peptidoglycan biosynthesis. Functionally, cell wall formation. This chain is D-alanine--D-alanine ligase, found in Gloeothece citriformis (strain PCC 7424) (Cyanothece sp. (strain PCC 7424)).